Reading from the N-terminus, the 1248-residue chain is Structural polyprotein (1248 aa).

The segment covering 1–10 (MEFIPTQTFY) has biased composition (polar residues). The segment at 1 to 104 (MEFIPTQTFY…KKKKPGRRER (104 aa)) is disordered. Residues 36-68 (RKAGQLAQLISAVNKLTMRAVPQQKPRKNRKNK) form a host transcription inhibition region. Residues 60–72 (KPRKNRKNKKQKQ) are compositionally biased toward basic residues. Positions 61 to 99 (PRKNRKNKKQKQKQQAPRNNMNQKKQPPKKKPAQKKKKP) match the Nuclear localization signal motif. The span at 73–85 (KQQAPRNNMNQKK) shows a compositional bias: low complexity. Positions 84-114 (KKQPPKKKPAQKKKKPGRRERMCMKIENDCI) are binding to the viral RNA. Over residues 86 to 101 (QPPKKKPAQKKKKPGR) the composition is skewed to basic residues. Residues 99–113 (PGRRERMCMKIENDC) are ribosome-binding. C113 and C128 form a disulfide bridge. In terms of domain architecture, Peptidase S3 spans 113–261 (CIFEVKHEGK…KITPEGAEEW (149 aa)). H139 functions as the Charge relay system in the catalytic mechanism. The Nuclear export signal signature appears at 144 to 154 (IDNADLAKLAF). The tract at residues 155–160 (KRSSKY) is interaction with spike glycoprotein E2. The active-site Charge relay system is D161. Residues 183 to 193 (PEGYYNWHHGA) form a dimerization of the capsid protein region. The active-site Charge relay system is the S213. Residues 219 to 223 (DNKGR) are dimerization of the capsid protein. The functions as an uncleaved signal peptide for the precursor of protein E3/E2 stretch occupies residues 262-274 (SLAIPVMCLLANT). Residues 262–692 (SLAIPVMCLL…YYYELYPTMT (431 aa)) lie on the Extracellular side of the membrane. 9 disulfide bridges follow: C269/C278, C283/C287, C286/C318, C344/C450, C347/C353, C416/C430, C478/C591, C526/C550, and C528/C545. The N-linked (GlcNAc...) asparagine; by host glycan is linked to N273. 2 interaction with host Mxra8 receptor regions span residues 351 to 354 (HSCH) and 387 to 389 (HDW). Interaction with host Mxra8 receptor regions lie at residues 509 to 512 (QSGN) and 541 to 547 (VINNCKV). Residues N588 and N670 are each glycosylated (N-linked (GlcNAc...) asparagine; by host). The helical transmembrane segment at 693–713 (VVVVSVASFVLLSMVGVAVGM) threads the bilayer. The Cytoplasmic portion of the chain corresponds to 714–748 (CMCARRRCITPYELTPGATVPFLLSLICCIRTAKA). The segment at 716 to 720 (CARRR) is interaction with the capsid protein. Residues C721, C741, and C742 are each lipidated (S-palmitoyl cysteine; by host). Positions 721-741 (CITPYELTPGATVPFLLSLIC) are transient transmembrane before p62-6K protein processing. Cysteines 721 and 742 form a disulfide. Residues 749 to 763 (ATYQEAAVYLWNEQQ) lie on the Extracellular side of the membrane. A helical membrane pass occupies residues 764-784 (PLFWLQAIIPLAALIVLCNCL). Residues 785 to 795 (RLLPCCCKTLT) are Cytoplasmic-facing. A helical membrane pass occupies residues 796–816 (FLAVMSVGAHTVSAYEHVTVI). At 817–1224 (PNTVGVPYKT…AMSWVQKITG (408 aa)) the chain is on the extracellular side. 3 cysteine pairs are disulfide-bonded: C858–C923, C871–C903, and C877–C887. Positions 893 to 910 (VYPFMWGGAYCFCDTENT) are E1 fusion peptide loop. N-linked (GlcNAc...) asparagine; by host glycosylation is found at N950 and N1079. 4 cysteine pairs are disulfide-bonded: C1068/C1080, C1110/C1185, C1115/C1189, and C1137/C1179. The helical transmembrane segment at 1225–1245 (GVGLVVAVAALILIVVLCVSF) threads the bilayer. The S-palmitoyl cysteine; by host moiety is linked to residue C1242. The Cytoplasmic portion of the chain corresponds to 1246 to 1248 (SRH).

In terms of assembly, homodimer. Homomultimer. Interacts with host karyopherin KPNA4; this interaction allows the nuclear import of the viral capsid protein. Interacts with spike glycoprotein E2. Interacts with host IRAK1; the interaction leads to inhibition of IRAK1-dependent signaling. The precursor of protein E3/E2 and E1 form a heterodimer shortly after synthesis. As to quaternary structure, interacts with spike glycoprotein E2. The precursor of protein E3/E2 and E1 form a heterodimer shortly after synthesis. Processing of the precursor of protein E3/E2 into E2 and E3 results in a heterodimer of the spike glycoproteins E2 and E1. Spike at virion surface are constituted of three E2-E1 heterodimers. After target cell attachment and endocytosis, E1 change conformation to form homotrimers. Interacts with 6K protein. Interacts with host MXRA8; this interaction mediates virus entry. The interaction involves 2 adjacent E2-E1 heterodimers. In terms of assembly, interacts with spike glycoprotein E1. Processing of the precursor of protein E3/E2 into E2 and E3 results in a heterodimer of the spike glycoproteins E2 and E1. Spike at virion surface are constituted of a trimer of E2-E1 heterodimers. Interacts with 6K protein. Interacts with host MXRA8; this interaction mediates virus entry. The interaction involves 2 adjacent E2-E1 heterodimers. Oligomer. Interacts with spike glycoprotein E1. Interacts with spike glycoprotein E2. Post-translationally, structural polyprotein: Specific enzymatic cleavages in vivo yield mature proteins. Capsid protein is auto-cleaved during polyprotein translation, unmasking a signal peptide at the N-terminus of the precursor of E3/E2. The remaining polyprotein is then targeted to the host endoplasmic reticulum, where host signal peptidase cleaves it into pE2, 6K and E1 proteins. pE2 is further processed to mature E3 and E2 by host furin in trans-Golgi vesicle. In terms of processing, palmitoylated via thioester bonds. These palmitoylations may induce disruption of the C-terminus transmembrane. This would result in the reorientation of E2 C-terminus from lumenal to cytoplasmic side. N-glycosylated. Post-translationally, palmitoylated via thioester bonds.

It is found in the virion. The protein localises to the host cytoplasm. Its subcellular location is the host cell membrane. It localises to the host nucleus. The protein resides in the virion membrane. It is found in the host Golgi apparatus. The protein localises to the host trans-Golgi network. Its subcellular location is the host endoplasmic reticulum. The catalysed reaction is Autocatalytic release of the core protein from the N-terminus of the togavirus structural polyprotein by hydrolysis of a -Trp-|-Ser- bond.. Forms an icosahedral capsid with a T=4 symmetry composed of 240 copies of the capsid protein surrounded by a lipid membrane through which penetrate 80 spikes composed of trimers of E1-E2 heterodimers. The capsid protein binds to the viral RNA genome at a site adjacent to a ribosome binding site for viral genome translation following genome release. Possesses a protease activity that results in its autocatalytic cleavage from the nascent structural protein. Following its self-cleavage, the capsid protein transiently associates with ribosomes, and within several minutes the protein binds to viral RNA and rapidly assembles into icosahedric core particles. The resulting nucleocapsid eventually associates with the cytoplasmic domain of the spike glycoprotein E2 at the cell membrane, leading to budding and formation of mature virions. In case of infection, new virions attach to target cells and after clathrin-mediated endocytosis their membrane fuses with the host endosomal membrane. This leads to the release of the nucleocapsid into the cytoplasm, followed by an uncoating event necessary for the genomic RNA to become accessible. The uncoating might be triggered by the interaction of capsid proteins with ribosomes. Binding of ribosomes would release the genomic RNA since the same region is genomic RNA-binding and ribosome-binding. Specifically inhibits interleukin-1 receptor-associated kinase 1/IRAK1-dependent signaling during viral entry, representing a means by which the alphaviruses may evade innate immune detection and activation prior to viral gene expression. Degrades host cyclic GMP-AMP synthase (CGAS) thereby inhibiting the cGAS-STING pathway. Functionally, provides the signal sequence for the translocation of the precursor of protein E3/E2 to the host endoplasmic reticulum. Furin-cleaved E3 remains associated with spike glycoprotein E1 and mediates pH protection of the latter during the transport via the secretory pathway. After virion release from the host cell, the assembly protein E3 is gradually released in the extracellular space. Its function is as follows. Plays a role in viral attachment to target host cell, by binding to the cell receptor MXRA8. Synthesized as a p62 precursor which is processed by furin at the cell membrane just before virion budding, giving rise to E2-E1 heterodimer. The p62-E1 heterodimer is stable, whereas E2-E1 is unstable and dissociate at low pH. p62 is processed at the last step, presumably to avoid E1 fusion activation before its final export to cell surface. E2 C-terminus contains a transitory transmembrane that would be disrupted by palmitoylation, resulting in reorientation of the C-terminal tail from lumenal to cytoplasmic side. This step is critical since E2 C-terminus is involved in budding by interacting with capsid proteins. This release of E2 C-terminus in cytoplasm occurs lately in protein export, and precludes premature assembly of particles at the endoplasmic reticulum membrane. In terms of biological role, acts as a viroporin that participates in virus glycoprotein processing and transport to the plasma membrane, cell permeabilization and budding of viral particles. Disrupts the calcium homeostasis of the cell, probably at the endoplasmic reticulum level. This leads to cytoplasmic calcium elevation. Because of its lipophilic properties, the 6K protein is postulated to influence the selection of lipids that interact with the transmembrane domains of the glycoproteins, which, in turn, affects the deformability of the bilayer required for the extreme curvature that occurs as budding proceeds. Present in low amount in virions, about 3% compared to viral glycoproteins. Class II viral fusion protein. Fusion activity is inactive as long as E1 is bound to E2 in mature virion. After virus attachment to target cell via host MXRA8 and endocytosis, acidification of the endosome induce dissociation of E1/E2 heterodimer and concomitant trimerization of the E1 subunits. This E1 trimer is fusion active, and promotes release of viral nucleocapsid in cytoplasm after endosome and viral membrane fusion. Efficient fusion requires the presence of cholesterol and sphingolipid in the target membrane. The sequence is that of Structural polyprotein from Chikungunya virus (strain Nagpur) (CHIKV).